The sequence spans 186 residues: Transcription factor pgmR (186 aa).

Residues 19–46 (CDECGAAKLKCDRGHPSCGRCISLGLKC) constitute a DNA-binding region (zn(2)-C6 fungal-type). The disordered stretch occupies residues 52–98 (RKAGKPRRDAQSATRPPPTPGDSGPPLDYNSFGPTSPPSSVGDGATL).

It is found in the nucleus. Its function is as follows. Transcription factor that specifically regulates the expression of the pgm gene cluster that mediates the biosynthesis of cryptic naphthoquinones derived pigments responsible for the coloration of the fruiting bodies. In Aspergillus terreus (strain NIH 2624 / FGSC A1156), this protein is Transcription factor pgmR.